The following is a 142-amino-acid chain: Sec-independent protein translocase protein TatB (142 aa).

A helical membrane pass occupies residues 1–21; that stretch reads MFDFGFSELVVIGVVMLIVVG. The disordered stretch occupies residues 99–142; that stretch reads AAPPDNTTSAESQAAADPAAVDSSQQLELRLDTTPKQVVGSDKA. The span at 107-124 shows a compositional bias: low complexity; sequence SAESQAAADPAAVDSSQQ.

This sequence belongs to the TatB family. The Tat system comprises two distinct complexes: a TatABC complex, containing multiple copies of TatA, TatB and TatC subunits, and a separate TatA complex, containing only TatA subunits. Substrates initially bind to the TatABC complex, which probably triggers association of the separate TatA complex to form the active translocon.

It is found in the cell inner membrane. In terms of biological role, part of the twin-arginine translocation (Tat) system that transports large folded proteins containing a characteristic twin-arginine motif in their signal peptide across membranes. Together with TatC, TatB is part of a receptor directly interacting with Tat signal peptides. TatB may form an oligomeric binding site that transiently accommodates folded Tat precursor proteins before their translocation. This is Sec-independent protein translocase protein TatB from Azoarcus sp. (strain BH72).